Consider the following 141-residue polypeptide: Large ribosomal subunit protein uL11 (141 aa).

This sequence belongs to the universal ribosomal protein uL11 family. As to quaternary structure, part of the ribosomal stalk of the 50S ribosomal subunit. Interacts with L10 and the large rRNA to form the base of the stalk. L10 forms an elongated spine to which L12 dimers bind in a sequential fashion forming a multimeric L10(L12)X complex. Post-translationally, one or more lysine residues are methylated.

Its function is as follows. Forms part of the ribosomal stalk which helps the ribosome interact with GTP-bound translation factors. This Picosynechococcus sp. (strain ATCC 27264 / PCC 7002 / PR-6) (Agmenellum quadruplicatum) protein is Large ribosomal subunit protein uL11.